The primary structure comprises 254 residues: Mamu class II histocompatibility antigen, DR alpha chain (254 aa).

Positions 1–25 are cleaved as a signal peptide; the sequence is MAESGVPVLGFFIIAVLMSAQESWA. The interval 26–109 is alpha-1; it reads IKEEHVIIQA…KRSNNTPITN (84 aa). At 26-216 the chain is on the extracellular side; sequence IKEEHVIIQA…APSPLPETTE (191 aa). N103 carries N-linked (GlcNAc...) asparagine glycosylation. An alpha-2 region spans residues 110 to 203; sequence VPPEVTVLTN…CLDAPLLKHW (94 aa). Residues 112–204 enclose the Ig-like C1-type domain; the sequence is PEVTVLTNSP…LDAPLLKHWE (93 aa). C132 and C188 are oxidised to a cystine. The connecting peptide stretch occupies residues 204-216; sequence EFDAPSPLPETTE. A helical transmembrane segment spans residues 217 to 239; the sequence is NVVCALGLIVGLVGIIVGTVFII. Over 240-254 the chain is Cytoplasmic; the sequence is KGVRKSNAAERRGPL. A Glycyl lysine isopeptide (Lys-Gly) (interchain with G-Cter in ubiquitin) cross-link involves residue K244.

It belongs to the MHC class II family. In terms of assembly, heterodimer of an alpha chain and a beta chain.

Its subcellular location is the membrane. The chain is Mamu class II histocompatibility antigen, DR alpha chain (Mamu-DRA) from Macaca mulatta (Rhesus macaque).